The following is a 367-amino-acid chain: 3-isopropylmalate dehydrogenase (367 aa).

80-93 is an NAD(+) binding site; it reads GKEWTHLPADEQPE. Residues arginine 101, arginine 111, arginine 140, and aspartate 230 each coordinate substrate. Residues aspartate 230, aspartate 254, and aspartate 258 each contribute to the Mg(2+) site. Residue 288 to 300 coordinates NAD(+); it reads GSAPDLKGKNIAN.

The protein belongs to the isocitrate and isopropylmalate dehydrogenases family. LeuB type 1 subfamily. In terms of assembly, homodimer. Requires Mg(2+) as cofactor. Mn(2+) serves as cofactor.

It localises to the cytoplasm. It carries out the reaction (2R,3S)-3-isopropylmalate + NAD(+) = 4-methyl-2-oxopentanoate + CO2 + NADH. It participates in amino-acid biosynthesis; L-leucine biosynthesis; L-leucine from 3-methyl-2-oxobutanoate: step 3/4. Catalyzes the oxidation of 3-carboxy-2-hydroxy-4-methylpentanoate (3-isopropylmalate) to 3-carboxy-4-methyl-2-oxopentanoate. The product decarboxylates to 4-methyl-2 oxopentanoate. This chain is 3-isopropylmalate dehydrogenase (leuB), found in Buchnera aphidicola subsp. Cinara cedri (strain Cc).